The sequence spans 374 residues: Aminomethyltransferase (374 aa).

This sequence belongs to the GcvT family. In terms of assembly, the glycine cleavage system is composed of four proteins: P, T, L and H.

The enzyme catalyses N(6)-[(R)-S(8)-aminomethyldihydrolipoyl]-L-lysyl-[protein] + (6S)-5,6,7,8-tetrahydrofolate = N(6)-[(R)-dihydrolipoyl]-L-lysyl-[protein] + (6R)-5,10-methylene-5,6,7,8-tetrahydrofolate + NH4(+). Functionally, the glycine cleavage system catalyzes the degradation of glycine. This chain is Aminomethyltransferase, found in Edwardsiella ictaluri (strain 93-146).